We begin with the raw amino-acid sequence, 37 residues long: MKIRASIRKICEKCRLICRRRRIIVICSNPRHKQRQG.

The protein belongs to the bacterial ribosomal protein bL36 family.

The protein resides in the plastid. The polypeptide is Large ribosomal subunit protein bL36c (rpl36) (Epifagus virginiana (Beechdrops)).